The chain runs to 763 residues: Phosphoglycerol transferase I (763 aa).

4 consecutive transmembrane segments (helical) span residues 1-21, 26-46, 77-97, and 108-128; these read MSELLSFALFLASVLIYAWKA, WWFAATLTVLGLFVVLNITLF, ILPGIGIVLGLTAVFGALGWI, and FGYSLLALLLALGSVDASPAF.

This sequence belongs to the OpgB family.

Its subcellular location is the cell inner membrane. It carries out the reaction a phosphatidylglycerol + a membrane-derived-oligosaccharide D-glucose = a 1,2-diacyl-sn-glycerol + a membrane-derived-oligosaccharide 6-(glycerophospho)-D-glucose.. It functions in the pathway glycan metabolism; osmoregulated periplasmic glucan (OPG) biosynthesis. In terms of biological role, transfers a phosphoglycerol residue from phosphatidylglycerol to the membrane-bound nascent glucan backbones. This chain is Phosphoglycerol transferase I, found in Escherichia coli O17:K52:H18 (strain UMN026 / ExPEC).